Reading from the N-terminus, the 435-residue chain is Adenylosuccinate synthetase (435 aa).

GTP contacts are provided by residues 13-19 and 41-43; these read GDEGKGK and GHT. The active-site Proton acceptor is Asp14. Asp14 and Gly41 together coordinate Mg(2+). IMP contacts are provided by residues 14–17, 39–42, Thr131, Arg145, Gln226, Thr241, and Arg309; these read DEGK and NAGH. His42 serves as the catalytic Proton donor. 305-311 is a binding site for substrate; that stretch reads TVTGRKR. Residues Arg311, 337-339, and 419-421 each bind GTP; these read KLD and STG.

The protein belongs to the adenylosuccinate synthetase family. As to quaternary structure, homodimer. Requires Mg(2+) as cofactor.

The protein resides in the cytoplasm. The catalysed reaction is IMP + L-aspartate + GTP = N(6)-(1,2-dicarboxyethyl)-AMP + GDP + phosphate + 2 H(+). It participates in purine metabolism; AMP biosynthesis via de novo pathway; AMP from IMP: step 1/2. Its function is as follows. Plays an important role in the de novo pathway of purine nucleotide biosynthesis. Catalyzes the first committed step in the biosynthesis of AMP from IMP. This is Adenylosuccinate synthetase from Dechloromonas aromatica (strain RCB).